We begin with the raw amino-acid sequence, 523 residues long: Vanin-like protein 3 (523 aa).

Positions 1–19 (MAVFLRRFLWLISFTLVLT) are cleaved as a signal peptide. The 270-residue stretch at 29-298 (YIAGVVEYRP…RKLLLAKVPL (270 aa)) folds into the CN hydrolase domain. N64 is a glycosylation site (N-linked (GlcNAc...) asparagine). E74 serves as the catalytic Proton acceptor. Residue K167 is the Proton donor of the active site. N-linked (GlcNAc...) asparagine glycans are attached at residues N177 and N192. C200 (nucleophile) is an active-site residue. Residues N330 and N468 are each glycosylated (N-linked (GlcNAc...) asparagine). Residue N498 is the site of GPI-anchor amidated asparagine attachment. The propeptide at 499-523 (GGAGRLGTLLFLLITPLIMMHLFRE) is removed in mature form.

The protein belongs to the carbon-nitrogen hydrolase superfamily. BTD/VNN family. Expressed in third instar larvae.

It is found in the cell membrane. The protein is Vanin-like protein 3 of Drosophila melanogaster (Fruit fly).